The chain runs to 79 residues: CDC42 small effector protein 1-B (79 aa).

S-palmitoyl cysteine attachment occurs at residues C10 and C11. One can recognise a CRIB domain in the interval 30–43 (IGEPMNFVHLTHIG). The interval 41-79 (HIGSGDMGASDGLPKAGTVQEQMRSKCGRDRQWSNSRVL) is disordered. A compositionally biased stretch (basic and acidic residues) spans 63 to 72 (MRSKCGRDRQ).

The protein belongs to the CDC42SE/SPEC family.

The protein localises to the cytoplasm. It localises to the cytoskeleton. The protein resides in the cell membrane. Its function is as follows. Probably involved in the organization of the actin cytoskeleton by acting downstream of CDC42, inducing actin filament assembly. The polypeptide is CDC42 small effector protein 1-B (cdc42se1-b) (Xenopus laevis (African clawed frog)).